A 237-amino-acid chain; its full sequence is Ubiquinone biosynthesis O-methyltransferase (237 aa).

Residues Arg39, Gly59, Asp80, and Met124 each contribute to the S-adenosyl-L-methionine site.

It belongs to the methyltransferase superfamily. UbiG/COQ3 family.

It carries out the reaction a 3-demethylubiquinol + S-adenosyl-L-methionine = a ubiquinol + S-adenosyl-L-homocysteine + H(+). The catalysed reaction is a 3-(all-trans-polyprenyl)benzene-1,2-diol + S-adenosyl-L-methionine = a 2-methoxy-6-(all-trans-polyprenyl)phenol + S-adenosyl-L-homocysteine + H(+). It participates in cofactor biosynthesis; ubiquinone biosynthesis. O-methyltransferase that catalyzes the 2 O-methylation steps in the ubiquinone biosynthetic pathway. In Vibrio atlanticus (strain LGP32) (Vibrio splendidus (strain Mel32)), this protein is Ubiquinone biosynthesis O-methyltransferase.